We begin with the raw amino-acid sequence, 359 residues long: MMLNSSTEDGIKRIQDDCPKAGRHNYIFVMIPTLYSIIFVVGIFGNSLAVIVIYFYMKLKTVASVFLLNLALADLCFLLTLPLWAVYTAMEYRWPFGNYLCKIASASVSFNLYASVFLLTCLSIDRYLAIVHPMKSRLRRTMLVAKVTCIIIWLLAGLASLPAIIHRNVFFIENTNITVCAFHYESQNSTLPIGLGLTKNILGFLFPFLIILTSYTLIWKALKKAYEIQKNKPRNDDIFKIIMAIVLFFFFSWVPHQIFTFLDVLIQLGVIHDCRIADIVDTAMPITICIAYFNNCLNPLFYGFLGKKFKKYFLQLLKYIPPKAKSHSNLSTKMSTLSYRPSDNVSSSSKKPVPCFEVE.

Residues 1–25 (MMLNSSTEDGIKRIQDDCPKAGRHN) lie on the Extracellular side of the membrane. The N-linked (GlcNAc...) asparagine glycan is linked to Asn4. Residues Gln15 and Asp17 each contribute to the angiotensin II site. Cystine bridges form between Cys18–Cys274 and Cys101–Cys180. Residues 26–55 (YIFVMIPTLYSIIFVVGIFGNSLAVIVIYF) form a helical membrane-spanning segment. Residues 56 to 61 (YMKLKT) are Cytoplasmic-facing. The chain crosses the membrane as a helical span at residues 62–89 (VASVFLLNLALADLCFLLTLPLWAVYTA). Topologically, residues 90-98 (MEYRWPFGN) are extracellular. A helical transmembrane segment spans residues 99-125 (YLCKIASASVSFNLYASVFLLTCLSID). At 126 to 141 (RYLAIVHPMKSRLRRT) the chain is on the cytoplasmic side. Residues 142–165 (MLVAKVTCIIIWLLAGLASLPAII) form a helical membrane-spanning segment. Over 166–190 (HRNVFFIENTNITVCAFHYESQNST) the chain is Extracellular. An angiotensin II-binding site is contributed by Arg167. An N-linked (GlcNAc...) asparagine glycan is attached at Asn176. Angiotensin II contacts are provided by Phe182, His183, and Tyr184. Asn188 carries N-linked (GlcNAc...) asparagine glycosylation. Residues 191–216 (LPIGLGLTKNILGFLFPFLIILTSYT) form a helical membrane-spanning segment. Lys199 provides a ligand contact to angiotensin II. Over 217–239 (LIWKALKKAYEIQKNKPRNDDIF) the chain is Cytoplasmic. The helical transmembrane segment at 240 to 268 (KIIMAIVLFFFFSWVPHQIFTFLDVLIQL) threads the bilayer. Topologically, residues 269-278 (GVIHDCRIAD) are extracellular. Residues 279–304 (IVDTAMPITICIAYFNNCLNPLFYGF) traverse the membrane as a helical segment. Residues 305–359 (LGKKFKKYFLQLLKYIPPKAKSHSNLSTKMSTLSYRPSDNVSSSSKKPVPCFEVE) are Cytoplasmic-facing. A compositionally biased stretch (polar residues) spans 335-350 (STLSYRPSDNVSSSSK). A disordered region spans residues 335-359 (STLSYRPSDNVSSSSKKPVPCFEVE). Cys355 is lipidated: S-palmitoyl cysteine.

It belongs to the G-protein coupled receptor 1 family. As to quaternary structure, interacts with MAS1. Interacts with ARRB1. Interacts with FLNA (via filamin repeat 21); increases PKA-mediated phosphorylation of FLNA. C-terminal Ser or Thr residues may be phosphorylated.

It is found in the cell membrane. Receptor for angiotensin II, a vasoconstricting peptide, which acts as a key regulator of blood pressure and sodium retention by the kidney. The activated receptor in turn couples to G-alpha proteins G(q) (GNAQ, GNA11, GNA14 or GNA15) and thus activates phospholipase C and increases the cytosolic Ca(2+) concentrations, which in turn triggers cellular responses such as stimulation of protein kinase C. The protein is Type-1 angiotensin II receptor (AGTR1) of Oryctolagus cuniculus (Rabbit).